A 190-amino-acid chain; its full sequence is Small ribosomal subunit protein uS7 (190 aa).

Threonine 2 carries the N-acetylthreonine modification.

It belongs to the universal ribosomal protein uS7 family. Component of the small ribosomal subunit. Part of the small subunit (SSU) processome, composed of more than 70 proteins and the RNA chaperone small nucleolar RNA (snoRNA) U3.

The protein resides in the cytoplasm. It is found in the nucleus. The protein localises to the nucleolus. In terms of biological role, component of the small ribosomal subunit. The ribosome is a large ribonucleoprotein complex responsible for the synthesis of proteins in the cell. Part of the small subunit (SSU) processome, first precursor of the small eukaryotic ribosomal subunit. During the assembly of the SSU processome in the nucleolus, many ribosome biogenesis factors, an RNA chaperone and ribosomal proteins associate with the nascent pre-rRNA and work in concert to generate RNA folding, modifications, rearrangements and cleavage as well as targeted degradation of pre-ribosomal RNA by the RNA exosome. The protein is Small ribosomal subunit protein uS7 (rps5) of Dictyostelium discoideum (Social amoeba).